The sequence spans 48 residues: SPbeta prophage-derived uncharacterized protein YotE (48 aa).

This Bacillus subtilis (strain 168) protein is SPbeta prophage-derived uncharacterized protein YotE (yotE).